The following is a 352-amino-acid chain: DNA polymerase IV (352 aa).

Positions Ile-6–Gly-186 constitute a UmuC domain. Residues Asp-10 and Asp-104 each contribute to the Mg(2+) site. Glu-105 is a catalytic residue.

This sequence belongs to the DNA polymerase type-Y family. In terms of assembly, monomer. It depends on Mg(2+) as a cofactor.

The protein localises to the cytoplasm. The enzyme catalyses DNA(n) + a 2'-deoxyribonucleoside 5'-triphosphate = DNA(n+1) + diphosphate. Functionally, poorly processive, error-prone DNA polymerase involved in untargeted mutagenesis. Copies undamaged DNA at stalled replication forks, which arise in vivo from mismatched or misaligned primer ends. These misaligned primers can be extended by PolIV. Exhibits no 3'-5' exonuclease (proofreading) activity. May be involved in translesional synthesis, in conjunction with the beta clamp from PolIII. The chain is DNA polymerase IV from Neisseria meningitidis serogroup A / serotype 4A (strain DSM 15465 / Z2491).